The chain runs to 235 residues: Small ribosomal subunit protein uS2c (235 aa).

This sequence belongs to the universal ribosomal protein uS2 family.

It is found in the plastid. The protein resides in the chloroplast. The protein is Small ribosomal subunit protein uS2c (rps2) of Huperzia lucidula (Shining clubmoss).